The chain runs to 397 residues: CCA-adding enzyme (397 aa).

2 residues coordinate ATP: G26 and R29. 2 residues coordinate CTP: G26 and R29. The Mg(2+) site is built by D39 and D41. R110, D153, R156, R159, and R162 together coordinate ATP. 5 residues coordinate CTP: R110, D153, R156, R159, and R162.

The protein belongs to the tRNA nucleotidyltransferase/poly(A) polymerase family. Bacterial CCA-adding enzyme type 3 subfamily. As to quaternary structure, homodimer. Mg(2+) is required as a cofactor.

It catalyses the reaction a tRNA precursor + 2 CTP + ATP = a tRNA with a 3' CCA end + 3 diphosphate. It carries out the reaction a tRNA with a 3' CCA end + 2 CTP + ATP = a tRNA with a 3' CCACCA end + 3 diphosphate. In terms of biological role, catalyzes the addition and repair of the essential 3'-terminal CCA sequence in tRNAs without using a nucleic acid template. Adds these three nucleotides in the order of C, C, and A to the tRNA nucleotide-73, using CTP and ATP as substrates and producing inorganic pyrophosphate. tRNA 3'-terminal CCA addition is required both for tRNA processing and repair. Also involved in tRNA surveillance by mediating tandem CCA addition to generate a CCACCA at the 3' terminus of unstable tRNAs. While stable tRNAs receive only 3'-terminal CCA, unstable tRNAs are marked with CCACCA and rapidly degraded. In Bacillus cereus (strain ATCC 10987 / NRS 248), this protein is CCA-adding enzyme.